The sequence spans 93 residues: Large ribosomal subunit protein uL23cz/uL23cy (93 aa).

The protein belongs to the universal ribosomal protein uL23 family. As to quaternary structure, part of the 50S ribosomal subunit.

It localises to the plastid. The protein localises to the chloroplast. Functionally, binds to 23S rRNA. The protein is Large ribosomal subunit protein uL23cz/uL23cy (rpl23-A) of Panax ginseng (Korean ginseng).